Reading from the N-terminus, the 417-residue chain is Serine hydroxymethyltransferase (417 aa).

(6S)-5,6,7,8-tetrahydrofolate is bound by residues L121 and 125-127 (GHL). K229 carries the N6-(pyridoxal phosphate)lysine modification. 355–357 (SPF) lines the (6S)-5,6,7,8-tetrahydrofolate pocket.

This sequence belongs to the SHMT family. In terms of assembly, homodimer. It depends on pyridoxal 5'-phosphate as a cofactor.

Its subcellular location is the cytoplasm. It carries out the reaction (6R)-5,10-methylene-5,6,7,8-tetrahydrofolate + glycine + H2O = (6S)-5,6,7,8-tetrahydrofolate + L-serine. Its pathway is one-carbon metabolism; tetrahydrofolate interconversion. It functions in the pathway amino-acid biosynthesis; glycine biosynthesis; glycine from L-serine: step 1/1. Catalyzes the reversible interconversion of serine and glycine with tetrahydrofolate (THF) serving as the one-carbon carrier. This reaction serves as the major source of one-carbon groups required for the biosynthesis of purines, thymidylate, methionine, and other important biomolecules. Also exhibits THF-independent aldolase activity toward beta-hydroxyamino acids, producing glycine and aldehydes, via a retro-aldol mechanism. This chain is Serine hydroxymethyltransferase, found in Stenotrophomonas maltophilia (strain R551-3).